A 53-amino-acid chain; its full sequence is UPF0337 protein LJ_0034.1 (53 aa).

The tract at residues 27 to 53 is disordered; the sequence is AREVEGKAQQAKGKVKSKATEVKEDLE. The span at 44–53 shows a compositional bias: basic and acidic residues; the sequence is KATEVKEDLE.

This sequence belongs to the UPF0337 (CsbD) family.

This Lactobacillus johnsonii (strain CNCM I-12250 / La1 / NCC 533) protein is UPF0337 protein LJ_0034.1.